Consider the following 508-residue polypeptide: Mitochondrial distribution and morphology protein 10 (508 aa).

The segment at 160–195 (PAHPTSTRPTPPQTPPSHTRQPSEPSTPAPSPTPGN) is disordered.

The protein belongs to the MDM10 family. Component of the ER-mitochondria encounter structure (ERMES) or MDM complex, composed of MMM1, MDM10, MDM12 and MDM34. Associates with the mitochondrial outer membrane sorting assembly machinery SAM(core) complex.

The protein resides in the mitochondrion outer membrane. Component of the ERMES/MDM complex, which serves as a molecular tether to connect the endoplasmic reticulum and mitochondria. Components of this complex are involved in the control of mitochondrial shape and protein biogenesis and may function in phospholipid exchange. MDM10 is involved in the late assembly steps of the general translocase of the mitochondrial outer membrane (TOM complex). Functions in the TOM40-specific route of the assembly of outer membrane beta-barrel proteins, including the association of TOM40 with the receptor TOM22 and small TOM proteins. Can associate with the SAM(core) complex as well as the MDM12-MMM1 complex, both involved in late steps of the major beta-barrel assembly pathway, that is responsible for biogenesis of all outer membrane beta-barrel proteins. May act as a switch that shuttles between both complexes and channels precursor proteins into the TOM40-specific pathway. Plays a role in mitochondrial morphology and in the inheritance of mitochondria. This is Mitochondrial distribution and morphology protein 10 from Cryptococcus neoformans var. neoformans serotype D (strain B-3501A) (Filobasidiella neoformans).